Reading from the N-terminus, the 54-residue chain is ATP synthase protein 8 (54 aa).

Residues 9–29 (WIINFFIVWTADFTLLIVLSI) form a helical membrane-spanning segment.

The protein belongs to the ATPase protein 8 family. In terms of assembly, F-type ATPases have 2 components, CF(1) - the catalytic core - and CF(0) - the membrane proton channel.

It is found in the mitochondrion membrane. In terms of biological role, mitochondrial membrane ATP synthase (F(1)F(0) ATP synthase or Complex V) produces ATP from ADP in the presence of a proton gradient across the membrane which is generated by electron transport complexes of the respiratory chain. F-type ATPases consist of two structural domains, F(1) - containing the extramembraneous catalytic core and F(0) - containing the membrane proton channel, linked together by a central stalk and a peripheral stalk. During catalysis, ATP synthesis in the catalytic domain of F(1) is coupled via a rotary mechanism of the central stalk subunits to proton translocation. Part of the complex F(0) domain. Minor subunit located with subunit a in the membrane. This chain is ATP synthase protein 8 (MT-ATP8), found in Arbacia lixula (Black urchin).